We begin with the raw amino-acid sequence, 385 residues long: Heterogeneous nuclear ribonucleoprotein 87F (385 aa).

RRM domains follow at residues 24 to 101 and 115 to 192; these read RKLF…RAVP and KKLF…KAIA. Disordered stretches follow at residues 192 to 289 and 305 to 385; these read AKQD…WNGG and GNGG…NRRY. 2 stretches are compositionally biased toward gly residues: residues 199–289 and 305–317; these read QGGG…WNGG and GNGG…GGFG. Polar residues predominate over residues 319–336; it reads EYQQSYGGGPQRNSNFGN. 2 stretches are compositionally biased toward gly residues: residues 344-362 and 369-385; these read QGGG…GQGF and TGGG…NRRY.

The protein localises to the nucleus. Its subcellular location is the cytoplasm. In terms of biological role, this protein is a component of ribonucleosomes. Could be needed to organize a concentration gradient of a dorsalizing morphogen (Dm) originating in the germinal vesicle. In Drosophila melanogaster (Fruit fly), this protein is Heterogeneous nuclear ribonucleoprotein 87F (Hrb87F).